The primary structure comprises 293 residues: Ribosomal protein L11 methyltransferase (293 aa).

Residues Thr145, Gly166, Asp188, and Asn230 each coordinate S-adenosyl-L-methionine.

It belongs to the methyltransferase superfamily. PrmA family.

The protein localises to the cytoplasm. It catalyses the reaction L-lysyl-[protein] + 3 S-adenosyl-L-methionine = N(6),N(6),N(6)-trimethyl-L-lysyl-[protein] + 3 S-adenosyl-L-homocysteine + 3 H(+). Methylates ribosomal protein L11. This chain is Ribosomal protein L11 methyltransferase, found in Escherichia coli (strain 55989 / EAEC).